A 100-amino-acid polypeptide reads, in one-letter code: Cell division protein DrpB (100 aa).

The Cytoplasmic segment spans residues 1 to 16 (MEYGSTKMEERLSRSP). A helical transmembrane segment spans residues 17-37 (GGKLALWAFYTWCGYFVWAMA). The Periplasmic segment spans residues 38–64 (RYIWVMSRIPDAPVSGFESDLGSTAGK). The chain crosses the membrane as a helical span at residues 65 to 85 (WLGALVGFLFMALVGALLGSI). At 86–100 (AWYTRPRPARSRRYE) the chain is on the cytoplasmic side.

This sequence belongs to the DrpB family. Bacterial adenylate cyclase hybrid (BACTH) studies show interaction of this protein with DamX, FtsI, FtsN, FtsQ, YmgF, DedD, FtsA and MalF, as well as weaker interactions with DedD, MalG and PBP2, but this assay often generates false positive results.

It is found in the cell inner membrane. Its function is as follows. A non-essential division protein that localizes to the septal ring in low ionic strength medium. In terms of biological role, localizes to the septal ring in about 30% of observed cells before cell constriction occurs; localization occurs in low ionic strength medium (0 NaCl) and requires FtsZ but not FtsEX. Overexpression partially restores correct FtsI localization to the division septum in an ftsEX deletion. Isolated as a multicopy suppressor of an ftsEX deletion mutant; it does not suppress other cell division defects (e.g. ftsA, ftsI, ftsQ or ftsZ). The chain is Cell division protein DrpB from Escherichia coli (strain K12).